The chain runs to 271 residues: Virulence regulon transcriptional activator VirF (271 aa).

The region spanning 167-265 (ERLQKFMEEN…GCTPSQARLT (99 aa)) is the HTH araC/xylS-type domain. 2 DNA-binding regions (H-T-H motif) span residues 184 to 205 (SKFA…GTVY) and 232 to 255 (IVDI…RRRF).

In terms of biological role, transcriptional activator of the Yersinia virulence regulon. The sequence is that of Virulence regulon transcriptional activator VirF (virF) from Yersinia enterocolitica.